The sequence spans 104 residues: DNA-directed RNA polymerase subunit omega (104 aa).

The tract at residues 60–104 (VIHPDPEGKREAVRRRAEEERLRKEEEERKIKEQIAKEKEEGEKI) is disordered. Positions 63–104 (PDPEGKREAVRRRAEEERLRKEEEERKIKEQIAKEKEEGEKI) are enriched in basic and acidic residues.

The protein belongs to the RNA polymerase subunit omega family. In terms of assembly, the RNAP catalytic core consists of 2 alpha, 1 beta, 1 beta' and 1 omega subunit. When a sigma factor is associated with the core the holoenzyme is formed, which can initiate transcription.

It carries out the reaction RNA(n) + a ribonucleoside 5'-triphosphate = RNA(n+1) + diphosphate. Promotes RNA polymerase assembly. Latches the N- and C-terminal regions of the beta' subunit thereby facilitating its interaction with the beta and alpha subunits. This chain is DNA-directed RNA polymerase subunit omega, found in Streptococcus sanguinis (strain SK36).